A 100-amino-acid polypeptide reads, in one-letter code: Small ribosomal subunit protein uS14c (100 aa).

It belongs to the universal ribosomal protein uS14 family. Part of the 30S ribosomal subunit.

It localises to the plastid. In terms of biological role, binds 16S rRNA, required for the assembly of 30S particles. This chain is Small ribosomal subunit protein uS14c (rps14), found in Cuscuta gronovii (Common dodder).